The following is a 615-amino-acid chain: 1-deoxy-D-xylulose-5-phosphate synthase (615 aa).

Thiamine diphosphate is bound by residues His72 and 113 to 115 (GHA). Mg(2+) is bound at residue Asp144. Residues 145 to 146 (GA), Asn173, Tyr281, and Glu360 each bind thiamine diphosphate. Residue Asn173 coordinates Mg(2+).

This sequence belongs to the transketolase family. DXPS subfamily. Homodimer. The cofactor is Mg(2+). It depends on thiamine diphosphate as a cofactor.

It carries out the reaction D-glyceraldehyde 3-phosphate + pyruvate + H(+) = 1-deoxy-D-xylulose 5-phosphate + CO2. The protein operates within metabolic intermediate biosynthesis; 1-deoxy-D-xylulose 5-phosphate biosynthesis; 1-deoxy-D-xylulose 5-phosphate from D-glyceraldehyde 3-phosphate and pyruvate: step 1/1. Functionally, catalyzes the acyloin condensation reaction between C atoms 2 and 3 of pyruvate and glyceraldehyde 3-phosphate to yield 1-deoxy-D-xylulose-5-phosphate (DXP). The polypeptide is 1-deoxy-D-xylulose-5-phosphate synthase (Thermus thermophilus (strain ATCC BAA-163 / DSM 7039 / HB27)).